Consider the following 247-residue polypeptide: uncharacterized protein (247 aa).

It to M.pneumoniae MPN_635 N-terminal region.

This is an uncharacterized protein from Mycoplasma pneumoniae (strain ATCC 29342 / M129 / Subtype 1) (Mycoplasmoides pneumoniae).